We begin with the raw amino-acid sequence, 181 residues long: Adenine phosphoribosyltransferase 2 (181 aa).

Residue serine 2 is modified to N-acetylserine.

Belongs to the purine/pyrimidine phosphoribosyltransferase family.

The protein localises to the cytoplasm. It catalyses the reaction AMP + diphosphate = 5-phospho-alpha-D-ribose 1-diphosphate + adenine. It participates in purine metabolism; AMP biosynthesis via salvage pathway; AMP from adenine: step 1/1. In terms of biological role, catalyzes a salvage reaction resulting in the formation of AMP, that is energically less costly than de novo synthesis. May lack catalytic activity. The chain is Adenine phosphoribosyltransferase 2 (APT2) from Saccharomyces cerevisiae (strain ATCC 204508 / S288c) (Baker's yeast).